A 379-amino-acid polypeptide reads, in one-letter code: Cytochrome bd-I ubiquinol oxidase subunit 2 (379 aa).

An N-formylmethionine modification is found at methionine 1. Residues 1-8 (MIDYEVLR) lie on the Cytoplasmic side of the membrane. Residues 9–28 (FIWWLLVGVLLIGFAVTDGF) form a helical membrane-spanning segment. Topologically, residues 29–79 (DMGVGMLTRFLGRNDTERRIMINSIAPHWDGNQVWLITAGGALFAAWPMVY) are periplasmic. Residues 80–99 (AAAFSGFYVAMILVLASLFF) form a helical membrane-spanning segment. At 100–122 (RPVGFDYRSKIEETRWRNMWDWG) the chain is on the cytoplasmic side. A helical transmembrane segment spans residues 123–142 (IFIGSFVPPLVIGVAFGNLL). The Periplasmic segment spans residues 143-164 (QGVPFNVDEYLRLYYTGNFFQL). Residues 165-184 (LNPFGLLAGVVSVGMIITQG) traverse the membrane as a helical segment. Residues 185-205 (ATYLQMRTVGELHLRTRATAQ) are Cytoplasmic-facing. A helical membrane pass occupies residues 206–225 (VAALVTLVCFALAGVWVMYG). The Periplasmic segment spans residues 226 to 262 (IDGYVVKSTMDHYAASNPLNKEVVREAGAWLVNFNNT). A helical membrane pass occupies residues 263–282 (PILWAIPALGVVLPLLTILT). Residues 283-292 (ARMDKAAWAF) are Cytoplasmic-facing. The helical transmembrane segment at 293-312 (VFSSLTLACIILTAGIAMFP) threads the bilayer. The Periplasmic portion of the chain corresponds to 313 to 336 (FVMPSSTMMNASLTMWDATSSQLT). The helical transmembrane segment at 337 to 356 (LNVMTWVAVVLVPIILLYTA) threads the bilayer. Residues 357-379 (WCYWKMFGRITKEDIERNTHSLY) are Cytoplasmic-facing.

Belongs to the cytochrome ubiquinol oxidase subunit 2 family. In terms of assembly, heterodimer of subunits I and II. Heme b is required as a cofactor. The cofactor is heme d cis-diol.

The protein localises to the cell inner membrane. It carries out the reaction 2 a ubiquinol + O2(in) + 4 H(+)(in) = 2 a ubiquinone + 2 H2O(in) + 4 H(+)(out). It functions in the pathway energy metabolism; oxidative phosphorylation. In terms of biological role, a terminal oxidase that produces a proton motive force by the vectorial transfer of protons across the inner membrane. It is the component of the aerobic respiratory chain of E.coli that predominates when cells are grown at low aeration. Generates a proton motive force using protons and electrons from opposite sides of the membrane to generate H(2)O, transferring 1 proton/electron. This chain is Cytochrome bd-I ubiquinol oxidase subunit 2 (cydB), found in Escherichia coli O157:H7.